The chain runs to 840 residues: MTLDMDAVLSDFVRSTGAEPGLARDLLEGKNWDVSAALSDFEQLRQVHAGNLSPPFSGGSTCPKTPEKGGSDREPTRPSRPILQRQDDVIQEKRLSRGISHASSSIVSLARSHVSSNGGGGGSSEHPLEMPICAFQLPDLTVYKEDFRSFIERDLIEQSMLVALEQAGRLNWWVSMDSTCQRLLPLATTGDGNCLLHAASLGMWGFHDRDLVLRKALYALMEKGVEKEALRRRWRWQQTQQNKESGLVYTEDEWQKEWNELIKLASSEPRMHLGSNGASGGGVESSEEPVYESLEEFHVFVLAHVLKRPIVVVADTMLRDSGGEAFAPIPFGGIYLPLEVPASQCHRSPLVLAYDQAHFSALVSMEQKESAKEQAVIPLTDSEHKLLPLHFAVDPGKGWEWGKDDNDNVRLASIILSLEVKLHLLHSYMNVKWIPLSSDSQAPLAQPESPTASAGDEPRSTPESGESDKESVGSSSLGNEGSRRKEKSKRDREKDKKRADSVANKLGSFGKTLGSKLKKNMGGLMHSKGPKPGGLGSGSGISSGTETLEKKKKNNTLKSWKGGKEEAAGDGPVSEKPPSESVGNGGSKYSQEVMQSLSTMRIAMQGEGKYIFVGTLKMGHRHQYQEEMIQRYLADAEERFLAEQKQKEVERKIMNGGLVSGPPPAKKPEPDGGEDQPSDSPAEPKAMAFSTAYPGGFTIPRPSGGGVHCQEPRRQLAGGPCVGGLPSYATFPRQYPGRPYPHQDNIPALEPGKDGVHRGALLPPQFRVADSYSNGYREPPEPDGWAGAPRGLPPTQTKCKQPNCSFYGHPETNNLCSCCYREELRRREREPGGELLAHRF.

A disordered region spans residues 49–88 (AGNLSPPFSGGSTCPKTPEKGGSDREPTRPSRPILQRQDD). The span at 65–77 (TPEKGGSDREPTR) shows a compositional bias: basic and acidic residues. Phosphoserine is present on S100. The tract at residues 152–401 (ERDLIEQSML…AVDPGKGWEW (250 aa)) is TRAF-binding. Residues 167–440 (AGRLNWWVSM…VKWIPLSSDS (274 aa)) are catalytic. One can recognise an OTU domain in the interval 183 to 365 (LLPLATTGDG…QAHFSALVSM (183 aa)). Residues 187 to 193 (ATTGDGN) form a regulatory loop region. D191 is a catalytic residue. The active-site Nucleophile is C194. Catalysis depends on H358, which acts as the Proton acceptor. Positions 440–452 (SQAPLAQPESPTA) are enriched in polar residues. 2 disordered regions span residues 440–592 (SQAP…YSQE) and 653–710 (IMNG…VHCQ). Composition is skewed to basic and acidic residues over residues 456 to 471 (DEPR…DKES) and 488 to 500 (SKRD…KRAD). 3 positions are modified to phosphoserine: S464, S467, and S471. The Nuclear localization signal motif lies at 483 to 498 (RRKEKSKRDREKDKKR). The segment covering 531–541 (KPGGLGSGSGI) has biased composition (gly residues). T730 bears the Phosphothreonine mark. The A20-type zinc finger occupies 793 to 828 (PPTQTKCKQPNCSFYGHPETNNLCSCCYREELRRRE). Residues C799, C804, C816, and C819 each contribute to the Zn(2+) site.

This sequence belongs to the peptidase C64 family. In terms of assembly, interacts with TRAF6. Interacts with PARK7, leading to inhibit deubiquitinase activity. Interacts with EGFR, ITCH and NEDD4. Interacts with TRAF3. Interacts with ZAP70 in activated T cells, but not in resting T cells. Post-translationally, phosphorylated by EGFR.

It localises to the cytoplasm. The protein localises to the nucleus. It catalyses the reaction Thiol-dependent hydrolysis of ester, thioester, amide, peptide and isopeptide bonds formed by the C-terminal Gly of ubiquitin (a 76-residue protein attached to proteins as an intracellular targeting signal).. With respect to regulation, deubiquitinase activity is inhibited following interaction with PARK7. Its function is as follows. Negative regulator of the non-canonical NF-kappa-B pathway that acts by mediating deubiquitination of TRAF3, an inhibitor of the NF-kappa-B pathway, thereby acting as a negative regulator of B-cell responses. In response to non-canonical NF-kappa-B stimuli, deubiquitinates 'Lys-48'-linked polyubiquitin chains of TRAF3, preventing TRAF3 proteolysis and over-activation of non-canonical NF-kappa-B. Negatively regulates mucosal immunity against infections. Deubiquitinates ZAP70, and thereby regulates T cell receptor (TCR) signaling that leads to the activation of NF-kappa-B. Plays a role in T cell homeostasis and is required for normal T cell responses, including production of IFNG and IL2. Mediates deubiquitination of EGFR. Has deubiquitinating activity toward 'Lys-11', 'Lys-48' and 'Lys-63'-linked polyubiquitin chains. Has a much higher catalytic rate with 'Lys-11'-linked polyubiquitin chains (in vitro); however the physiological significance of these data are unsure. Hydrolyzes both linear and branched forms of polyubiquitin. Acts as a regulator of mTORC1 and mTORC2 assembly by mediating 'Lys-63'-linked deubiquitination of MLST8, thereby promoting assembly of the mTORC2 complex, while inibiting formation of the mTORC1 complex. This Mus musculus (Mouse) protein is OTU domain-containing protein 7B (Otud7b).